Reading from the N-terminus, the 451-residue chain is tRNA-2-methylthio-N(6)-dimethylallyladenosine synthase (451 aa).

The MTTase N-terminal domain occupies 18-134; the sequence is ARVYLETYGC…LPNLLDLAES (117 aa). [4Fe-4S] cluster contacts are provided by C27, C63, C97, C170, C174, and C177. One can recognise a Radical SAM core domain in the interval 156-386; it reads RKNGHSAFLA…IALQQKISAE (231 aa). One can recognise a TRAM domain in the interval 389–451; the sequence is RNDIGNTHEV…TSATLIGNAL (63 aa).

This sequence belongs to the methylthiotransferase family. MiaB subfamily. As to quaternary structure, monomer. [4Fe-4S] cluster is required as a cofactor.

The protein resides in the cytoplasm. It carries out the reaction N(6)-dimethylallyladenosine(37) in tRNA + (sulfur carrier)-SH + AH2 + 2 S-adenosyl-L-methionine = 2-methylsulfanyl-N(6)-dimethylallyladenosine(37) in tRNA + (sulfur carrier)-H + 5'-deoxyadenosine + L-methionine + A + S-adenosyl-L-homocysteine + 2 H(+). Its function is as follows. Catalyzes the methylthiolation of N6-(dimethylallyl)adenosine (i(6)A), leading to the formation of 2-methylthio-N6-(dimethylallyl)adenosine (ms(2)i(6)A) at position 37 in tRNAs that read codons beginning with uridine. The sequence is that of tRNA-2-methylthio-N(6)-dimethylallyladenosine synthase from Chloroherpeton thalassium (strain ATCC 35110 / GB-78).